The following is a 143-amino-acid chain: MELNGIKPSLGAKHAKRRVGRGIGSGLGKTAGRGHKGQKSRAGGYHKVGFEGGQMPMQRRLPKRGFKSHLLKFNAEVTLSALEQLGLAEVDLLALKTAGLVGQLAKNVKVIKSGELSKAVKLNGISATAGAKAIIEAAGGSVA.

A disordered region spans residues 1 to 59; that stretch reads MELNGIKPSLGAKHAKRRVGRGIGSGLGKTAGRGHKGQKSRAGGYHKVGFEGGQMPMQR. Positions 21–31 are enriched in gly residues; the sequence is RGIGSGLGKTA.

This sequence belongs to the universal ribosomal protein uL15 family. As to quaternary structure, part of the 50S ribosomal subunit.

Its function is as follows. Binds to the 23S rRNA. The chain is Large ribosomal subunit protein uL15 from Polaromonas sp. (strain JS666 / ATCC BAA-500).